The chain runs to 316 residues: uncharacterized protein (316 aa).

The protein belongs to the chlamydial CPn_0441/CT_007/TC_0275 family.

This is an uncharacterized protein from Chlamydia muridarum (strain MoPn / Nigg).